Consider the following 147-residue polypeptide: Anti-sigma F factor (147 aa).

It belongs to the anti-sigma-factor family.

It carries out the reaction L-seryl-[protein] + ATP = O-phospho-L-seryl-[protein] + ADP + H(+). The catalysed reaction is L-threonyl-[protein] + ATP = O-phospho-L-threonyl-[protein] + ADP + H(+). Binds to sigma F and blocks its ability to form an RNA polymerase holoenzyme (E-sigma F). Phosphorylates SpoIIAA on a serine residue. This phosphorylation may enable SpoIIAA to act as an anti-anti-sigma factor that counteracts SpoIIAB and thus releases sigma F from inhibition. The polypeptide is Anti-sigma F factor (Priestia megaterium (Bacillus megaterium)).